A 308-amino-acid chain; its full sequence is MFADSAVACVISALRAVGVDSPLMSELVPRLLFVHAHPDDETLTTGGTIAHYVRRGADVRVVTCTLGEEGEVIGEQYAQLAVDHADQLGGYRIAELTAALAALGVDAPHFLGGPGHWRDSGMADTPARHQPRFVDADMAEAAGLLAAILDDFRPHVVVTYDPDGGYGHPDHVQTHRVTTAAVERAQWQVPKFYWTVMSKSGMGDAFAVARDVPEEWLQVSVDDVPFLYTDDRIDAVVDVSDSIEAKVAAMRAHATQISVAPNGQSCALSNNIAMPIPGVEHYVLVSGAPGPRDARGWETDLLAGVNLA.

The Zn(2+) site is built by H37, D40, and H171.

Belongs to the MshB deacetylase family. Zn(2+) serves as cofactor.

It carries out the reaction 1D-myo-inositol 2-acetamido-2-deoxy-alpha-D-glucopyranoside + H2O = 1D-myo-inositol 2-amino-2-deoxy-alpha-D-glucopyranoside + acetate. Functionally, catalyzes the deacetylation of 1D-myo-inositol 2-acetamido-2-deoxy-alpha-D-glucopyranoside (GlcNAc-Ins) in the mycothiol biosynthesis pathway. This is 1D-myo-inositol 2-acetamido-2-deoxy-alpha-D-glucopyranoside deacetylase from Mycobacterium sp. (strain JLS).